The primary structure comprises 262 residues: MARGPKKHLKRLAAPSHWMLDKLSGTYAPRPSAGPHKLRESLPLVVFLRNRLKYALNGREVKAIMMQQHVQVDGKVRTDTTYPAGFMDVITLEATNEHFRLVYDVKGKFAVHRISAEEAAYKLGKVKKVQLGKKGVPYVVTHDGRTIRYPDPLIRANDTVKIDLATGKIDDFIKFDTGRLVMVTGGRNLGRVGVIVHREKHEGGFDLVHIKDALENTFVTRLSNVFVIGTEAGKPWVSLPKGKGIKLSISEERDRRRAQQGL.

The S4 RNA-binding domain maps to leucine 42–valine 105. The region spanning glycine 178–lysine 211 is the KOW domain.

It belongs to the eukaryotic ribosomal protein eS4 family. Component of the small ribosomal subunit. Mature ribosomes consist of a small (40S) and a large (60S) subunit. The 40S subunit contains about 32 different proteins and 1 molecule of RNA (18S). The 60S subunit contains 45 different proteins and 3 molecules of RNA (25S, 5.8S and 5S).

It is found in the cytoplasm. Component of the ribosome, a large ribonucleoprotein complex responsible for the synthesis of proteins in the cell. The small ribosomal subunit (SSU) binds messenger RNAs (mRNAs) and translates the encoded message by selecting cognate aminoacyl-transfer RNA (tRNA) molecules. The large subunit (LSU) contains the ribosomal catalytic site termed the peptidyl transferase center (PTC), which catalyzes the formation of peptide bonds, thereby polymerizing the amino acids delivered by tRNAs into a polypeptide chain. The nascent polypeptides leave the ribosome through a tunnel in the LSU and interact with protein factors that function in enzymatic processing, targeting, and the membrane insertion of nascent chains at the exit of the ribosomal tunnel. This chain is Small ribosomal subunit protein eS4 (RPS42), found in Candida albicans (strain SC5314 / ATCC MYA-2876) (Yeast).